A 243-amino-acid chain; its full sequence is Transmembrane protein 174 (243 aa).

2 helical membrane passes run 40–60 (LLFS…MGWI) and 73–93 (LLGP…VCKF).

Interacts with SLC34A1; regulates SLC34A1 internalization by PTH and FGF23. In terms of tissue distribution, kidney specific. Expressed in renal primary proximal tubule cells.

Its subcellular location is the endoplasmic reticulum membrane. It is found in the apical cell membrane. Functionally, regulator of plasma phosphate homeostasis. Decreases serum inorganic phosphate (Pi) uptake by regulating the sodium-phosphate cotransporter SLC34A1 trafficking by PTH and FGF23 in the kidney. This is Transmembrane protein 174 (Tmem174) from Mus musculus (Mouse).